Consider the following 416-residue polypeptide: Putative competence-damage inducible protein (416 aa).

The protein belongs to the CinA family.

The polypeptide is Putative competence-damage inducible protein (Levilactobacillus brevis (strain ATCC 367 / BCRC 12310 / CIP 105137 / JCM 1170 / LMG 11437 / NCIMB 947 / NCTC 947) (Lactobacillus brevis)).